Consider the following 265-residue polypeptide: Phosphatidylserine decarboxylase proenzyme (265 aa).

Active-site charge relay system; for autoendoproteolytic cleavage activity residues include Asp86, His142, and Ser226. Ser226 serves as the catalytic Schiff-base intermediate with substrate; via pyruvic acid; for decarboxylase activity. The residue at position 226 (Ser226) is a Pyruvic acid (Ser); by autocatalysis.

It belongs to the phosphatidylserine decarboxylase family. PSD-B subfamily. Prokaryotic type I sub-subfamily. Heterodimer of a large membrane-associated beta subunit and a small pyruvoyl-containing alpha subunit. Pyruvate serves as cofactor. Post-translationally, is synthesized initially as an inactive proenzyme. Formation of the active enzyme involves a self-maturation process in which the active site pyruvoyl group is generated from an internal serine residue via an autocatalytic post-translational modification. Two non-identical subunits are generated from the proenzyme in this reaction, and the pyruvate is formed at the N-terminus of the alpha chain, which is derived from the carboxyl end of the proenzyme. The autoendoproteolytic cleavage occurs by a canonical serine protease mechanism, in which the side chain hydroxyl group of the serine supplies its oxygen atom to form the C-terminus of the beta chain, while the remainder of the serine residue undergoes an oxidative deamination to produce ammonia and the pyruvoyl prosthetic group on the alpha chain. During this reaction, the Ser that is part of the protease active site of the proenzyme becomes the pyruvoyl prosthetic group, which constitutes an essential element of the active site of the mature decarboxylase.

The protein resides in the cell membrane. It catalyses the reaction a 1,2-diacyl-sn-glycero-3-phospho-L-serine + H(+) = a 1,2-diacyl-sn-glycero-3-phosphoethanolamine + CO2. The protein operates within phospholipid metabolism; phosphatidylethanolamine biosynthesis; phosphatidylethanolamine from CDP-diacylglycerol: step 2/2. Functionally, catalyzes the formation of phosphatidylethanolamine (PtdEtn) from phosphatidylserine (PtdSer). The chain is Phosphatidylserine decarboxylase proenzyme from Anoxybacillus flavithermus (strain DSM 21510 / WK1).